The chain runs to 582 residues: ATP-dependent lipid A-core flippase (582 aa).

The next 5 membrane-spanning stretches (helical) occupy residues 25 to 45 (AGLI…TFML), 69 to 89 (LAVI…SYCI), 137 to 159 (ASSS…LFIM), 253 to 273 (PIIQ…ASFP), and 275 to 295 (VMET…IALM). The 283-residue stretch at 28 to 310 (IVAAIALILN…LTNVNTQFQR (283 aa)) folds into the ABC transmembrane type-1 domain. The ABC transporter domain occupies 342-578 (IEFRHVTFYY…QGVYAQLNRM (237 aa)). Residue 376–383 (GRSGSGKS) participates in ATP binding.

Belongs to the ABC transporter superfamily. Lipid exporter (TC 3.A.1.106) family. Homodimer.

The protein resides in the cell inner membrane. It catalyses the reaction ATP + H2O + lipid A-core oligosaccharideSide 1 = ADP + phosphate + lipid A-core oligosaccharideSide 2.. Involved in lipopolysaccharide (LPS) biosynthesis. Translocates lipid A-core from the inner to the outer leaflet of the inner membrane. Transmembrane domains (TMD) form a pore in the inner membrane and the ATP-binding domain (NBD) is responsible for energy generation. In Yersinia pestis bv. Antiqua (strain Antiqua), this protein is ATP-dependent lipid A-core flippase.